We begin with the raw amino-acid sequence, 381 residues long: Cobalt-precorrin-5B C(1)-methyltransferase (381 aa).

Belongs to the CbiD family.

The enzyme catalyses Co-precorrin-5B + S-adenosyl-L-methionine = Co-precorrin-6A + S-adenosyl-L-homocysteine. It functions in the pathway cofactor biosynthesis; adenosylcobalamin biosynthesis; cob(II)yrinate a,c-diamide from sirohydrochlorin (anaerobic route): step 6/10. Functionally, catalyzes the methylation of C-1 in cobalt-precorrin-5B to form cobalt-precorrin-6A. The polypeptide is Cobalt-precorrin-5B C(1)-methyltransferase (Methylococcus capsulatus (strain ATCC 33009 / NCIMB 11132 / Bath)).